We begin with the raw amino-acid sequence, 96 residues long: Co-chaperonin GroES (96 aa).

It belongs to the GroES chaperonin family. Heptamer of 7 subunits arranged in a ring. Interacts with the chaperonin GroEL.

The protein resides in the cytoplasm. In terms of biological role, together with the chaperonin GroEL, plays an essential role in assisting protein folding. The GroEL-GroES system forms a nano-cage that allows encapsulation of the non-native substrate proteins and provides a physical environment optimized to promote and accelerate protein folding. GroES binds to the apical surface of the GroEL ring, thereby capping the opening of the GroEL channel. This is Co-chaperonin GroES from Methylorubrum populi (strain ATCC BAA-705 / NCIMB 13946 / BJ001) (Methylobacterium populi).